The primary structure comprises 153 residues: Small ribosomal subunit protein bS16 (153 aa).

The disordered stretch occupies residues 130 to 153 (EAEAAAAAEEAPAEEAAEEAPAEA). Positions 140–153 (APAEEAAEEAPAEA) are enriched in acidic residues.

Belongs to the bacterial ribosomal protein bS16 family.

This is Small ribosomal subunit protein bS16 from Bifidobacterium longum (strain NCC 2705).